A 642-amino-acid chain; its full sequence is MLLTHTSSRWRTAAVCALAATASWLPSVQAAEKTQADYFVSSLPGAPEGPLLKMHAGHIEVDAEHNSNLFFWHYENRHIADRQRTVLWLNGGPGCSSMDGAMMEIGPYRVKHGGHLEYNNGSWDEFANMLFIDQPVGTGFSYVNTDSYLTDLDQMAEHMMIFLEKWFKLFPEYENDDLYIAGESYAGQHIPYIARAILNRNKNQNTDPKPWNLKGLLIGNGWISPADQYLAYLPFAYQNGMIQADSDSAKRVEQQQSICIQKLQDGGHDKVDTSECEQIMVAILEETKDRKADRMNQCLNMYDIRLRDDSSCGMNWPPDLTDVTPYLRRPDVIKALHINSDKKTGWSECNGAVSGHFRAKNSVPTVKFLPELLTEVPILLFSGDKDFICNHVGTEAMIENMSWNGGKGWEVSPGVWAPKQDWTFEGEPAGTYQEVRNLTYVVFYNSSHMVPFDYPKRTRDMLDRFMNVDISAIGGDPADSRIDGEKGPLTSVGDHPNSTKAEEDKAQQLKEAEWKAYYRSGEVVLVILIIVACLWGAFLWRTRRSTSLYKGVDGDEGRESLLTGMGLDNFRRGARRHDVEAADFDERELDDLDDAPKKPANGYSNVNSEKERQPHNDSTFSLGADSDDEAEGSERGRRKEHS.

Residues 1–30 (MLLTHTSSRWRTAAVCALAATASWLPSVQA) form the signal peptide. Residues 31 to 519 (AEKTQADYFV…KEAEWKAYYR (489 aa)) lie on the Lumenal side of the membrane. Asparagine 120 carries an N-linked (GlcNAc...) asparagine glycan. Active-site residues include serine 184 and aspartate 386. N-linked (GlcNAc...) asparagine glycans are attached at residues asparagine 400, asparagine 437, and asparagine 445. The active site involves histidine 448. The segment at 476-500 (DPADSRIDGEKGPLTSVGDHPNSTK) is disordered. Residue asparagine 497 is glycosylated (N-linked (GlcNAc...) asparagine). A helical transmembrane segment spans residues 520 to 540 (SGEVVLVILIIVACLWGAFLW). Over 541–642 (RTRRSTSLYK…SERGRRKEHS (102 aa)) the chain is Cytoplasmic. The segment at 586–642 (ERELDDLDDAPKKPANGYSNVNSEKERQPHNDSTFSLGADSDDEAEGSERGRRKEHS) is disordered. Residues 632-642 (GSERGRRKEHS) show a composition bias toward basic and acidic residues.

This sequence belongs to the peptidase S10 family.

It is found in the golgi apparatus. It localises to the trans-Golgi network membrane. The catalysed reaction is Preferential release of a C-terminal arginine or lysine residue.. In terms of biological role, protease with a carboxypeptidase B-like function involved in the C-terminal processing of the lysine and arginine residues from protein precursors. Promotes cell fusion and is involved in the programmed cell death. The protein is Pheromone-processing carboxypeptidase KEX1 (KEX1) of Phaeosphaeria nodorum (strain SN15 / ATCC MYA-4574 / FGSC 10173) (Glume blotch fungus).